We begin with the raw amino-acid sequence, 106 residues long: Glycine/glutamate-rich protein sgp1 (106 aa).

A signal peptide spans 1-20; the sequence is MKYSLIFILTLACLIASSLA. Positions 20–66 are disordered; sequence ARPEGEEKPADDAAGDKKEEGAEGDKTAAGGDEGFTGGDGKNAGGAG. Positions 22-45 are enriched in basic and acidic residues; that stretch reads PEGEEKPADDAAGDKKEEGAEGDK. Residues 50-66 show a composition bias toward gly residues; the sequence is GDEGFTGGDGKNAGGAG.

It localises to the secreted. The polypeptide is Glycine/glutamate-rich protein sgp1 (sgp1) (Glossina morsitans morsitans (Savannah tsetse fly)).